Here is a 258-residue protein sequence, read N- to C-terminus: Hemin import ATP-binding protein HmuV (258 aa).

Residues 2–242 form the ABC transporter domain; the sequence is LTAEKLCVER…SKIEELYDFP (241 aa). 34–41 contributes to the ATP binding site; it reads GANGAGKS.

It belongs to the ABC transporter superfamily. Heme (hemin) importer (TC 3.A.1.14.5) family. The complex is composed of two ATP-binding proteins (HmuV), two transmembrane proteins (HmuU) and a solute-binding protein (HmuT).

The protein localises to the cell inner membrane. Its function is as follows. Part of the ABC transporter complex HmuTUV involved in hemin import. Responsible for energy coupling to the transport system. The sequence is that of Hemin import ATP-binding protein HmuV from Hydrogenovibrio crunogenus (strain DSM 25203 / XCL-2) (Thiomicrospira crunogena).